Here is a 295-residue protein sequence, read N- to C-terminus: 4-hydroxy-tetrahydrodipicolinate synthase (295 aa).

Thr46 is a binding site for pyruvate. The active-site Proton donor/acceptor is Tyr134. Catalysis depends on Lys162, which acts as the Schiff-base intermediate with substrate. Residue Ile205 participates in pyruvate binding.

Belongs to the DapA family. As to quaternary structure, homotetramer; dimer of dimers.

The protein localises to the cytoplasm. It carries out the reaction L-aspartate 4-semialdehyde + pyruvate = (2S,4S)-4-hydroxy-2,3,4,5-tetrahydrodipicolinate + H2O + H(+). Its pathway is amino-acid biosynthesis; L-lysine biosynthesis via DAP pathway; (S)-tetrahydrodipicolinate from L-aspartate: step 3/4. Catalyzes the condensation of (S)-aspartate-beta-semialdehyde [(S)-ASA] and pyruvate to 4-hydroxy-tetrahydrodipicolinate (HTPA). This is 4-hydroxy-tetrahydrodipicolinate synthase from Anaeromyxobacter dehalogenans (strain 2CP-C).